Reading from the N-terminus, the 515-residue chain is ATP-dependent rRNA helicase rrp-3 (515 aa).

Residues 1–85 (MSTKRRKTSD…LDVAPEQEEV (85 aa)) form a disordered region. A compositionally biased stretch (low complexity) spans 15-24 (LKKAAAPSAP). The segment covering 25-55 (ELKKEKKVKDKSTKDKSSTKKTEKTEKKQDA) has biased composition (basic and acidic residues). Acidic residues predominate over residues 69–85 (TEEDSVTLDVAPEQEEV). Residues 90–118 (KTFKDLGIVDALCEACERLGYKNPTPIQE) carry the Q motif motif. Residues 121-292 (IPLALQNRDI…RASLRDPLKV (172 aa)) form the Helicase ATP-binding domain. 134-141 (AETGSGKT) contributes to the ATP binding site. The DEAD box signature appears at 240-243 (DEAD). The Helicase C-terminal domain maps to 316 to 464 (HKDTYLVYLC…EYPLEKDEVM (149 aa)). The interval 482-515 (KSLMENQGKHGGLLKRKRGNGQGGGRDHMDAEEG) is disordered. Positions 506 to 515 (GRDHMDAEEG) are enriched in basic and acidic residues.

It belongs to the DEAD box helicase family. DDX47/RRP3 subfamily.

Its subcellular location is the nucleus. Its function is as follows. Required for pre-ribosomal RNA processing. Involved in the maturation of the 35S-pre-rRNA and to its cleavage to mature 18S rRNA. The polypeptide is ATP-dependent rRNA helicase rrp-3 (rrp-3) (Neurospora crassa (strain ATCC 24698 / 74-OR23-1A / CBS 708.71 / DSM 1257 / FGSC 987)).